Consider the following 611-residue polypeptide: Dehydrogenase pkfF (611 aa).

The first 19 residues, 1-19, serve as a signal peptide directing secretion; it reads MRHTALLPLVSSFIVPALA. 2 N-linked (GlcNAc...) asparagine glycosylation sites follow: Asn28 and Asn38. Residues 50–51, 71–72, and 137–140 each bind FAD; these read TS, EA, and HYMV. N-linked (GlcNAc...) asparagine glycosylation is found at Asn180, Asn187, Asn240, Asn272, Asn409, and Asn471. The Proton acceptor role is filled by His547. FAD-binding positions include Ala581 and 592–593; that span reads PQ.

Belongs to the GMC oxidoreductase family. The cofactor is FAD.

It functions in the pathway secondary metabolite biosynthesis. Dehydrogenase; part of the gene cluster that mediates the biosynthesis of aspernidine A, a prenylated isoindolinone. The starting point of the biosynthesis of aspernidin A is the production of orsellinaldehyde by the non-reducing polyketide synthase pkfA. Hydroxylation, methylation of one of the phenol groups, and prenylation, presumably catalyzed by the prenyltransferase pkfE, would be needed to yield aspernidine D. Subsequently, the cytochrome P450 monooxygenase pkfB is responsible for hydroxylation of aspernidine D to yield aspernidine E. The dehydrogenase pkfF may be responsible for further oxidation of aspernidine E to form a dialdehyde intermediate which is further transformed in a series of steps, some of which are enzyme-mediated, to generate aspernidine A. The possibility that additional enzymes outside of the cluster are involved in aspernidine A biosynthesis cannot be excluded. The sequence is that of Dehydrogenase pkfF from Emericella nidulans (strain FGSC A4 / ATCC 38163 / CBS 112.46 / NRRL 194 / M139) (Aspergillus nidulans).